Here is a 431-residue protein sequence, read N- to C-terminus: Ornithine aminotransferase, mitochondrial (431 aa).

Residue Lys286 is modified to N6-(pyridoxal phosphate)lysine.

Belongs to the class-III pyridoxal-phosphate-dependent aminotransferase family. In terms of assembly, homotetramer. The cofactor is pyridoxal 5'-phosphate.

The protein resides in the mitochondrion matrix. It catalyses the reaction a 2-oxocarboxylate + L-ornithine = L-glutamate 5-semialdehyde + an L-alpha-amino acid. It functions in the pathway amino-acid biosynthesis; L-proline biosynthesis; L-glutamate 5-semialdehyde from L-ornithine: step 1/1. The sequence is that of Ornithine aminotransferase, mitochondrial (Oat) from Drosophila melanogaster (Fruit fly).